A 114-amino-acid polypeptide reads, in one-letter code: Small ribosomal subunit protein bS16 (114 aa).

Residues 87–114 (AFREQPVQSAPKKKAQERAAERAKAAEA) are disordered. Positions 100–114 (KAQERAAERAKAAEA) are enriched in basic and acidic residues.

The protein belongs to the bacterial ribosomal protein bS16 family.

This is Small ribosomal subunit protein bS16 from Acidiphilium cryptum (strain JF-5).